The chain runs to 313 residues: tRNA dimethylallyltransferase (313 aa).

An ATP-binding site is contributed by Gly12 to Ser19. Residue Thr14–Ser19 participates in substrate binding. Interaction with substrate tRNA stretches follow at residues Asp37–Gln40 and Gln161–Arg165.

Belongs to the IPP transferase family. Monomer. Mg(2+) serves as cofactor.

The catalysed reaction is adenosine(37) in tRNA + dimethylallyl diphosphate = N(6)-dimethylallyladenosine(37) in tRNA + diphosphate. In terms of biological role, catalyzes the transfer of a dimethylallyl group onto the adenine at position 37 in tRNAs that read codons beginning with uridine, leading to the formation of N6-(dimethylallyl)adenosine (i(6)A). This Pelagibacter ubique (strain HTCC1062) protein is tRNA dimethylallyltransferase.